The chain runs to 365 residues: ATP-dependent (S)-NAD(P)H-hydrate dehydratase (365 aa).

The transit peptide at methionine 1–arginine 43 directs the protein to the chloroplast. Leucine 2 carries the post-translational modification N-acetylserine. The YjeF C-terminal domain occupies alanine 53–isoleucine 361. (6S)-NADPHX is bound by residues glycine 169 and asparagine 222–arginine 228. ATP-binding positions include lysine 262–aspartate 266 and glycine 281–glycine 290. Aspartate 291 is a (6S)-NADPHX binding site.

This sequence belongs to the NnrD/CARKD family. Mg(2+) is required as a cofactor.

It localises to the plastid. The protein resides in the chloroplast. It is found in the cytoplasm. The catalysed reaction is (6S)-NADHX + ATP = ADP + phosphate + NADH + H(+). It catalyses the reaction (6S)-NADPHX + ATP = ADP + phosphate + NADPH + H(+). Catalyzes the dehydration of the S-form of NAD(P)HX at the expense of ATP, which is converted to ADP. Together with NAD(P)HX epimerase, which catalyzes the epimerization of the S- and R-forms, the enzyme allows the repair of both epimers of NAD(P)HX, a damaged form of NAD(P)H that is a result of enzymatic or heat-dependent hydration. The protein is ATP-dependent (S)-NAD(P)H-hydrate dehydratase of Arabidopsis thaliana (Mouse-ear cress).